We begin with the raw amino-acid sequence, 554 residues long: Phenylalanine--tRNA ligase beta subunit (554 aa).

Positions 276–351 constitute a B5 domain; it reads LTPRYREISI…KNHGYEKFEG (76 aa). Mg(2+) contacts are provided by Asp-329, Asp-335, Glu-338, and Glu-339.

This sequence belongs to the phenylalanyl-tRNA synthetase beta subunit family. Type 2 subfamily. As to quaternary structure, tetramer of two alpha and two beta subunits. It depends on Mg(2+) as a cofactor.

Its subcellular location is the cytoplasm. The catalysed reaction is tRNA(Phe) + L-phenylalanine + ATP = L-phenylalanyl-tRNA(Phe) + AMP + diphosphate + H(+). The chain is Phenylalanine--tRNA ligase beta subunit from Methanococcus vannielii (strain ATCC 35089 / DSM 1224 / JCM 13029 / OCM 148 / SB).